The sequence spans 832 residues: SID1 transmembrane family member 2 (832 aa).

The first 15 residues, 1–15 (MIAWRLPLCVLLVAA), serve as a signal peptide directing secretion. At 16-293 (VESHLGALGP…VSQAVTSEAY (278 aa)) the chain is on the extracellular side. N-linked (GlcNAc...) asparagine glycosylation is found at Asn-27, Asn-54, Asn-60, Asn-123, Asn-141, and Asn-165. Residues 294–314 (VGGMLFCLGIFLSFYLLTVLL) traverse the membrane as a helical segment. Residues 315-447 (ACWENWRQRK…DKRVLRKKYQ (133 aa)) are Cytoplasmic-facing. Phosphoserine is present on residues Ser-401, Ser-403, and Ser-404. A helical transmembrane segment spans residues 448 to 468 (IYFWNIATIAVFYALPVVQLV). At 469–499 (ITYQTVVNVTGNQDICYYNFLCAHPLGNLSA) the chain is on the extracellular side. N-linked (GlcNAc...) asparagine glycosylation is found at Asn-476 and Asn-496. A helical membrane pass occupies residues 500–520 (FNNILSNLGYILLGLLFLLII). The Cytoplasmic segment spans residues 521–546 (LQREINHNRALLRNDLYALECGIPKH). Residues 547–567 (FGLFYAMGTALMMEGLLSACY) traverse the membrane as a helical segment. Topologically, residues 568-605 (HVCPNYTNFQFDTSFMYMIAGLCMLKLYQKRHPDINAS) are extracellular. Residues Asn-572 and Asn-603 are each glycosylated (N-linked (GlcNAc...) asparagine). A helical transmembrane segment spans residues 606–626 (AYSAYACLAIVIFFSVLGVVF). The Cytoplasmic segment spans residues 627 to 631 (GKGNT). The chain crosses the membrane as a helical span at residues 632–652 (AFWIVFSVIHIISTLLLSTQL). Residues 653-688 (YYMGRWKLDSGIFRRILHVLYTDCIRQCSGPLYTDR) are Extracellular-facing. Residues 689-709 (MVLLVMGNIINWSLAAYGLIM) traverse the membrane as a helical segment. The Cytoplasmic portion of the chain corresponds to 710 to 715 (RPNDFA). The chain crosses the membrane as a helical span at residues 716–736 (SYLLAIGICNLLLYFAFYIIM). Residues 737-746 (KLRSGERIKL) are Extracellular-facing. Residues 747 to 767 (IPLLCIVCTSVVWGFALFFFF) traverse the membrane as a helical segment. At 768–796 (QGLSTWQKTPAESREHNRDCILLDFFDDH) the chain is on the cytoplasmic side. A helical membrane pass occupies residues 797-817 (DIWHFLSSIAMFGSFLVLLTL). At 818 to 832 (DDDLDTVQRDKIYVF) the chain is on the extracellular side.

It belongs to the SID1 family. In terms of assembly, interacts with adapter protein complex 1 (AP-1) and AP-2, but not AP-3 and AP-4. Interacts with LAMP2. Glycosylated. As to expression, highly expressed in the liver, brain, kidney and intestine (at protein level).

It localises to the lysosome membrane. It is found in the cell membrane. Its function is as follows. Mediates the translocation of RNA and DNA across the lysosomal membrane during RNA and DNA autophagy (RDA), a process in which RNA or DNA is directly imported into lysosomes in an ATP-dependent manner, and degraded. Involved in the uptake of single-stranded oligonucleotides by living cells, a process called gymnosis. In vitro, mediates the uptake of linear DNA more efficiently than that of circular DNA, but exhibits similar uptake efficacy toward RNA and DNA. Binds long double-stranded RNA (dsRNA) (500 - 700 base pairs), but not dsRNA shorter than 100 bp. The chain is SID1 transmembrane family member 2 (Sidt2) from Rattus norvegicus (Rat).